We begin with the raw amino-acid sequence, 570 residues long: Hydroxylamine reductase (570 aa).

[4Fe-4S] cluster contacts are provided by cysteine 5, cysteine 8, cysteine 17, and cysteine 23. The hybrid [4Fe-2O-2S] cluster site is built by histidine 266, glutamate 290, cysteine 334, cysteine 425, cysteine 453, cysteine 478, glutamate 513, and lysine 515. Residue cysteine 425 is modified to Cysteine persulfide.

Belongs to the HCP family. [4Fe-4S] cluster is required as a cofactor. Hybrid [4Fe-2O-2S] cluster serves as cofactor.

The protein localises to the cytoplasm. It catalyses the reaction A + NH4(+) + H2O = hydroxylamine + AH2 + H(+). Catalyzes the reduction of hydroxylamine to form NH(3) and H(2)O. This chain is Hydroxylamine reductase, found in Clostridium botulinum (strain 657 / Type Ba4).